We begin with the raw amino-acid sequence, 126 residues long: Aspartate 1-decarboxylase (126 aa).

Ser25 acts as the Schiff-base intermediate with substrate; via pyruvic acid in catalysis. Ser25 carries the post-translational modification Pyruvic acid (Ser). Thr57 is a binding site for substrate. Tyr58 serves as the catalytic Proton donor. 73 to 75 contacts substrate; the sequence is GGA.

It belongs to the PanD family. Heterooctamer of four alpha and four beta subunits. The cofactor is pyruvate. In terms of processing, is synthesized initially as an inactive proenzyme, which is activated by self-cleavage at a specific serine bond to produce a beta-subunit with a hydroxyl group at its C-terminus and an alpha-subunit with a pyruvoyl group at its N-terminus.

The protein localises to the cytoplasm. It carries out the reaction L-aspartate + H(+) = beta-alanine + CO2. It participates in cofactor biosynthesis; (R)-pantothenate biosynthesis; beta-alanine from L-aspartate: step 1/1. In terms of biological role, catalyzes the pyruvoyl-dependent decarboxylation of aspartate to produce beta-alanine. The protein is Aspartate 1-decarboxylase of Xanthomonas campestris pv. campestris (strain ATCC 33913 / DSM 3586 / NCPPB 528 / LMG 568 / P 25).